Reading from the N-terminus, the 64-residue chain is Large ribosomal subunit protein bL35 (64 aa).

This sequence belongs to the bacterial ribosomal protein bL35 family.

The chain is Large ribosomal subunit protein bL35 from Pseudomonas savastanoi pv. phaseolicola (strain 1448A / Race 6) (Pseudomonas syringae pv. phaseolicola (strain 1448A / Race 6)).